The following is a 49-amino-acid chain: Large ribosomal subunit protein bL36 (49 aa).

It belongs to the bacterial ribosomal protein bL36 family.

The chain is Large ribosomal subunit protein bL36 from Pseudomonas fluorescens (strain ATCC BAA-477 / NRRL B-23932 / Pf-5).